A 79-amino-acid chain; its full sequence is Protein GOLVEN 2 (79 aa).

The first 26 residues, 1–26 (MAIRVSHKSFLVALLLILFISSPTQA), serve as a signal peptide directing secretion. Residues 27-65 (RSLREVVRNRTLLVVEKSQESRKIRHEGGGSDVDGLMDM) constitute a propeptide that is removed on maturation. The disordered stretch occupies residues 49–79 (KIRHEGGGSDVDGLMDMDYNSANKKRPIHNR). Y67 carries the sulfotyrosine modification. Hydroxyproline is present on P75.

This sequence belongs to the RGF family. As to quaternary structure, binds to LRR receptor-like serine/threonine-protein kinases to trigger their dimerization with SERK proteins and subsequent signaling. In terms of tissue distribution, expressed in siliques, stems, hypocotyls, shoot apex, leaves, flowers and cotyledons, and, to a lower extent, in roots.

It is found in the secreted. The protein localises to the endoplasmic reticulum. Its function is as follows. Signaling peptide (root growth factor) that regulates the pattern of root growth and lateral root development by modulating the length and the number of cortical cells in the root apical meristem (RAM), and the anticlinal asymmetric cell divisions in lateral root initiation cells. Also involved in the regulation of hypocotyl bending and root gravitropism, probably by influencing the formation of auxin gradients. Maintains the postembryonic root stem cell niche. The protein is Protein GOLVEN 2 of Arabidopsis thaliana (Mouse-ear cress).